A 497-amino-acid chain; its full sequence is Glycerol kinase (497 aa).

Thr-12 serves as a coordination point for ADP. 3 residues coordinate ATP: Thr-12, Thr-13, and Ser-14. Thr-12 contacts sn-glycerol 3-phosphate. ADP is bound at residue Arg-16. Arg-82, Glu-83, Tyr-134, and Asp-243 together coordinate sn-glycerol 3-phosphate. Glycerol contacts are provided by Arg-82, Glu-83, Tyr-134, Asp-243, and Gln-244. Thr-265 and Gly-308 together coordinate ADP. The ATP site is built by Thr-265, Gly-308, Gln-312, and Gly-409. ADP-binding residues include Gly-409 and Asn-413.

This sequence belongs to the FGGY kinase family.

It catalyses the reaction glycerol + ATP = sn-glycerol 3-phosphate + ADP + H(+). Its pathway is polyol metabolism; glycerol degradation via glycerol kinase pathway; sn-glycerol 3-phosphate from glycerol: step 1/1. Its activity is regulated as follows. Inhibited by fructose 1,6-bisphosphate (FBP). Its function is as follows. Key enzyme in the regulation of glycerol uptake and metabolism. Catalyzes the phosphorylation of glycerol to yield sn-glycerol 3-phosphate. The polypeptide is Glycerol kinase (Nitratidesulfovibrio vulgaris (strain ATCC 29579 / DSM 644 / CCUG 34227 / NCIMB 8303 / VKM B-1760 / Hildenborough) (Desulfovibrio vulgaris)).